Here is a 131-residue protein sequence, read N- to C-terminus: Profilin-2 (131 aa).

This sequence belongs to the profilin family. Occurs in many kinds of cells as a complex with monomeric actin in a 1:1 ratio. As to expression, expressed in the intestinal wall, the spermatheca, and the pharynx.

It is found in the cytoplasm. It localises to the cytoskeleton. Binds to actin and affects the structure of the cytoskeleton. At high concentrations, profilin prevents the polymerization of actin, whereas it enhances it at low concentrations. By binding to PIP2, it inhibits the formation of IP3 and DG. This Caenorhabditis elegans protein is Profilin-2 (pfn-2).